The sequence spans 124 residues: Small ribosomal subunit protein uS12 (124 aa).

Asp89 is modified (3-methylthioaspartic acid).

This sequence belongs to the universal ribosomal protein uS12 family. Part of the 30S ribosomal subunit. Contacts proteins S8 and S17. May interact with IF1 in the 30S initiation complex.

In terms of biological role, with S4 and S5 plays an important role in translational accuracy. Functionally, interacts with and stabilizes bases of the 16S rRNA that are involved in tRNA selection in the A site and with the mRNA backbone. Located at the interface of the 30S and 50S subunits, it traverses the body of the 30S subunit contacting proteins on the other side and probably holding the rRNA structure together. The combined cluster of proteins S8, S12 and S17 appears to hold together the shoulder and platform of the 30S subunit. The chain is Small ribosomal subunit protein uS12 from Blochmanniella floridana.